Reading from the N-terminus, the 413-residue chain is Divalent metal cation transporter MntH (413 aa).

The next 11 helical transmembrane spans lie at 19–39, 49–69, 94–114, 122–142, 155–175, 196–216, 240–260, 287–307, 323–343, 349–369, and 393–413; these read FALM…GNFA, GYQL…IQLM, VWFY…AEFI, LVFG…TFLI, LVIG…LFFS, AVLL…IYLH, VAIA…TAAA, AAAL…TVVG, IPLL…ILAG, ILVM…IPLL, and LIVV…ALNL.

This sequence belongs to the NRAMP family.

It localises to the cell inner membrane. H(+)-stimulated, divalent metal cation uptake system. This chain is Divalent metal cation transporter MntH, found in Erwinia tasmaniensis (strain DSM 17950 / CFBP 7177 / CIP 109463 / NCPPB 4357 / Et1/99).